Consider the following 306-residue polypeptide: Glutaminase (306 aa).

7 residues coordinate substrate: serine 64, asparagine 115, glutamate 159, asparagine 166, tyrosine 190, tyrosine 242, and valine 260.

The protein belongs to the glutaminase family. In terms of assembly, homotetramer.

The catalysed reaction is L-glutamine + H2O = L-glutamate + NH4(+). The protein is Glutaminase of Aliivibrio salmonicida (strain LFI1238) (Vibrio salmonicida (strain LFI1238)).